We begin with the raw amino-acid sequence, 157 residues long: MTQPTCPCGSGDPLDDCCGRYHQGHPAPTAEALMRSRYSAYALGLVDYLRDTTLPAQQAGLDLDGIRAWSHGSTWLGLEVENHEVLGGQPEHARVTFVARWHDAEGEHAHRECSGFVQRNGRWYFLDPTVALKLGRNDPCPCGAGGKLKKCCGPWIT.

This sequence belongs to the UPF0225 family.

The sequence is that of UPF0225 protein PA14_50900 from Pseudomonas aeruginosa (strain UCBPP-PA14).